The chain runs to 242 residues: Cysteine desulfuration protein SufE (242 aa).

The Cysteine persulfide intermediate role is filled by Cys-148.

This sequence belongs to the SufE family. As to quaternary structure, monomer. Interacts with SufS; interaction enhances cysteine desulfurase activity of SufS.

The protein localises to the plastid. It localises to the apicoplast. It functions in the pathway cofactor biosynthesis; iron-sulfur cluster biosynthesis. Participates in sulfur mobilization (SUF) pathway for iron-sulfur (Fe-S) cluster biogenesis. Enhances cysteine desulfurase activity of SufS. Probably functions as a sulfur acceptor for SufS. This Plasmodium vivax protein is Cysteine desulfuration protein SufE.